Here is a 215-residue protein sequence, read N- to C-terminus: Riboflavin synthase (215 aa).

Lumazine-binding repeat units lie at residues 1 to 96 (MFTG…FGGH) and 97 to 193 (FVSG…YRFL). 2,4-dihydroxypteridine contacts are provided by residues 4–6 (GIV), 47–49 (CLT), 61–66 (DVMPET), 100–102 (GHV), lysine 135, 144–146 (SST), and 158–163 (SVIPHT).

In terms of assembly, homotrimer.

The catalysed reaction is 2 6,7-dimethyl-8-(1-D-ribityl)lumazine + H(+) = 5-amino-6-(D-ribitylamino)uracil + riboflavin. The protein operates within cofactor biosynthesis; riboflavin biosynthesis; riboflavin from 2-hydroxy-3-oxobutyl phosphate and 5-amino-6-(D-ribitylamino)uracil: step 2/2. Functionally, catalyzes the dismutation of two molecules of 6,7-dimethyl-8-ribityllumazine, resulting in the formation of riboflavin and 5-amino-6-(D-ribitylamino)uracil. This chain is Riboflavin synthase (ribE), found in Bacillus amyloliquefaciens (Bacillus velezensis).